The sequence spans 317 residues: Transcriptional regulator LsrR (317 aa).

The H-T-H motif DNA-binding region spans 33 to 56 (QSEISDRLGLTRLKVSRLLEKGHQ).

The protein belongs to the SorC transcriptional regulatory family.

Its subcellular location is the cytoplasm. With respect to regulation, inactivated by phosphorylated autoinducer-2 (phospho-AI-2). Phospho-AI-2 acts by binding to LsrR, which is then unable to bind to the promoter regions, allowing the transcription of the target genes. In terms of biological role, transcriptional regulator that represses the expression of the lsr operon in the absence of the quorum-sensing signaling molecule autoinducer 2 (AI-2). It also represses the expression of the lsrRK operon. Acts by binding directly to the lsrA and lsrR promoter regions. In the presence of phosphorylated autoinducer-2 (phospho-AI-2), LsrR is inactivated, leading to the transcription of the genes. This is Transcriptional regulator LsrR (lsrR) from Escherichia coli O157:H7.